Here is an 889-residue protein sequence, read N- to C-terminus: Putative receptor-like protein kinase At3g46340 (889 aa).

The first 25 residues, 1–25 (MEFPHSVLLVVLIIATFAISNLVQA), serve as a signal peptide directing secretion. Residues 26-514 (EEDQEGFISL…VITKKKFPVM (489 aa)) lie on the Extracellular side of the membrane. N-linked (GlcNAc...) asparagine glycans are attached at residues N185, N239, N259, N292, N316, N342, N366, N419, N435, N448, N467, and N474. LRR repeat units lie at residues 414 to 437 (RITSLNLSSTGLTGNIAAGIQNLT), 438 to 460 (HLDKLDLSNNNLTGGVPEFLASM), and 462 to 483 (SLSFINLSKNNLNGSIPQALLK). The helical transmembrane segment at 515-535 (IVALVSSAVVVILVVLVLIFV) threads the bilayer. Topologically, residues 536–889 (FKKKKPSNLE…FDTKAVPSAR (354 aa)) are cytoplasmic. The disordered stretch occupies residues 544–566 (LEDLPPSSNTPRENITSTSISDT). Residues 585 to 874 (KNLQRPLGEG…TQGMDSHSSF (290 aa)) enclose the Protein kinase domain. ATP is bound by residues 591-599 (LGEGGFGVV) and K614. Y659 carries the post-translational modification Phosphotyrosine. The active-site Proton acceptor is D711. At S745 the chain carries Phosphoserine. Phosphothreonine is present on residues T746 and T751. A Phosphotyrosine modification is found at Y759. Residues 863 to 889 (NKTQGMDSHSSFEQSMSFDTKAVPSAR) form a disordered region. Polar residues predominate over residues 864 to 880 (KTQGMDSHSSFEQSMSF).

It belongs to the protein kinase superfamily. Ser/Thr protein kinase family.

It is found in the cell membrane. It catalyses the reaction L-seryl-[protein] + ATP = O-phospho-L-seryl-[protein] + ADP + H(+). The enzyme catalyses L-threonyl-[protein] + ATP = O-phospho-L-threonyl-[protein] + ADP + H(+). The polypeptide is Putative receptor-like protein kinase At3g46340 (Arabidopsis thaliana (Mouse-ear cress)).